Consider the following 279-residue polypeptide: Putative pyruvate, phosphate dikinase regulatory protein (279 aa).

153-160 (GISRTSKT) serves as a coordination point for ADP.

The protein belongs to the pyruvate, phosphate/water dikinase regulatory protein family. PDRP subfamily.

The enzyme catalyses N(tele)-phospho-L-histidyl/L-threonyl-[pyruvate, phosphate dikinase] + ADP = N(tele)-phospho-L-histidyl/O-phospho-L-threonyl-[pyruvate, phosphate dikinase] + AMP + H(+). The catalysed reaction is N(tele)-phospho-L-histidyl/O-phospho-L-threonyl-[pyruvate, phosphate dikinase] + phosphate + H(+) = N(tele)-phospho-L-histidyl/L-threonyl-[pyruvate, phosphate dikinase] + diphosphate. In terms of biological role, bifunctional serine/threonine kinase and phosphorylase involved in the regulation of the pyruvate, phosphate dikinase (PPDK) by catalyzing its phosphorylation/dephosphorylation. The polypeptide is Putative pyruvate, phosphate dikinase regulatory protein (Brucella abortus (strain 2308)).